The following is a 91-amino-acid chain: Acyl carrier protein (91 aa).

Positions 6-81 (EEIIAELGQI…DIVAYIQKLE (76 aa)) constitute a Carrier domain. The residue at position 41 (Ser-41) is an O-(pantetheine 4'-phosphoryl)serine.

Belongs to the acyl carrier protein (ACP) family. In terms of processing, 4'-phosphopantetheine is transferred from CoA to a specific serine of apo-ACP by AcpS. This modification is essential for activity because fatty acids are bound in thioester linkage to the sulfhydryl of the prosthetic group.

The protein resides in the cytoplasm. The protein operates within lipid metabolism; fatty acid biosynthesis. Its function is as follows. Carrier of the growing fatty acid chain in fatty acid biosynthesis. The protein is Acyl carrier protein of Rhodococcus erythropolis (strain PR4 / NBRC 100887).